The following is a 46-amino-acid chain: Small polypeptide DEVIL 5 (46 aa).

Residues valine 8 to valine 24 traverse the membrane as a helical segment. Residues methionine 15–aspartate 46 form a required for DVL/RTFL small polypeptide activity region.

Belongs to the DVL/RTFL small polypeptides family. In terms of tissue distribution, mostly expressed in roots and flowers, and, to a lower extent, in leaves and stems.

It is found in the cell membrane. In terms of biological role, small polypeptide acting as a regulatory molecule which coordinates cellular responses required for differentiation, growth and development, including leaves shape, pedicule elongation, inflorescence organization and fruit maturation, probably by restricting polar cell proliferation in lateral organs and coordinating socket cell recruitment and differentiation at trichome sites. This chain is Small polypeptide DEVIL 5, found in Arabidopsis thaliana (Mouse-ear cress).